Consider the following 67-residue polypeptide: Kappa-scoloptoxin(04)-Ssd1b (67 aa).

Positions 1-24 (MKKTCVVSVFLVLLLLKFHDLSMG) are cleaved as a signal peptide. Residues 25 to 36 (EEISPLKKVARR) constitute a propeptide that is removed on maturation. Cystine bridges form between Cys-44/Cys-55 and Cys-49/Cys-62.

In terms of tissue distribution, expressed by the venom gland.

It is found in the secreted. This Scolopendra dehaani (Thai centipede) protein is Kappa-scoloptoxin(04)-Ssd1b.